Here is a 207-residue protein sequence, read N- to C-terminus: Large ribosomal subunit protein uL4 (207 aa).

The protein belongs to the universal ribosomal protein uL4 family. As to quaternary structure, part of the 50S ribosomal subunit.

Its function is as follows. One of the primary rRNA binding proteins, this protein initially binds near the 5'-end of the 23S rRNA. It is important during the early stages of 50S assembly. It makes multiple contacts with different domains of the 23S rRNA in the assembled 50S subunit and ribosome. Functionally, forms part of the polypeptide exit tunnel. This chain is Large ribosomal subunit protein uL4, found in Rickettsia africae (strain ESF-5).